The following is a 642-amino-acid chain: 4-hydroxy-3-methylbut-2-enyl diphosphate reductase (642 aa).

Residues 1–282 (MRKVMLAEKA…EEAISKMSEN (282 aa)) form a 4-hydroxy-3-methylbut-2-enyl diphosphate reductase region. Residue cysteine 13 participates in [4Fe-4S] cluster binding. (2E)-4-hydroxy-3-methylbut-2-enyl diphosphate is bound by residues histidine 42 and histidine 77. Positions 42 and 77 each coordinate dimethylallyl diphosphate. Residues histidine 42 and histidine 77 each coordinate isopentenyl diphosphate. Cysteine 99 contacts [4Fe-4S] cluster. Histidine 127 lines the (2E)-4-hydroxy-3-methylbut-2-enyl diphosphate pocket. Histidine 127 is a dimethylallyl diphosphate binding site. Histidine 127 contacts isopentenyl diphosphate. The Proton donor role is filled by glutamate 129. Residue threonine 165 coordinates (2E)-4-hydroxy-3-methylbut-2-enyl diphosphate. Cysteine 193 provides a ligand contact to [4Fe-4S] cluster. (2E)-4-hydroxy-3-methylbut-2-enyl diphosphate contacts are provided by serine 221, serine 222, asparagine 223, and serine 266. Dimethylallyl diphosphate is bound by residues serine 221, serine 222, asparagine 223, and serine 266. Serine 221, serine 222, asparagine 223, and serine 266 together coordinate isopentenyl diphosphate. 3 S1 motif domains span residues 309 to 377 (GASV…LSVK), 484 to 552 (GQVV…LSVK), and 569 to 638 (GSVV…LSIR).

The protein in the N-terminal section; belongs to the IspH family. [4Fe-4S] cluster is required as a cofactor.

It carries out the reaction isopentenyl diphosphate + 2 oxidized [2Fe-2S]-[ferredoxin] + H2O = (2E)-4-hydroxy-3-methylbut-2-enyl diphosphate + 2 reduced [2Fe-2S]-[ferredoxin] + 2 H(+). The catalysed reaction is dimethylallyl diphosphate + 2 oxidized [2Fe-2S]-[ferredoxin] + H2O = (2E)-4-hydroxy-3-methylbut-2-enyl diphosphate + 2 reduced [2Fe-2S]-[ferredoxin] + 2 H(+). It functions in the pathway isoprenoid biosynthesis; dimethylallyl diphosphate biosynthesis; dimethylallyl diphosphate from (2E)-4-hydroxy-3-methylbutenyl diphosphate: step 1/1. The protein operates within isoprenoid biosynthesis; isopentenyl diphosphate biosynthesis via DXP pathway; isopentenyl diphosphate from 1-deoxy-D-xylulose 5-phosphate: step 6/6. In terms of biological role, catalyzes the conversion of 1-hydroxy-2-methyl-2-(E)-butenyl 4-diphosphate (HMBPP) into a mixture of isopentenyl diphosphate (IPP) and dimethylallyl diphosphate (DMAPP). Acts in the terminal step of the DOXP/MEP pathway for isoprenoid precursor biosynthesis. The chain is 4-hydroxy-3-methylbut-2-enyl diphosphate reductase from Clostridium acetobutylicum (strain ATCC 824 / DSM 792 / JCM 1419 / IAM 19013 / LMG 5710 / NBRC 13948 / NRRL B-527 / VKM B-1787 / 2291 / W).